The chain runs to 136 residues: Peptide methionine sulfoxide reductase MsrB (136 aa).

The region spanning 9-136 is the MsrB domain; sequence DAEWKALLAE…NSASLDFKKK (128 aa). Cys-53, Cys-56, Cys-102, and Cys-105 together coordinate Zn(2+). Cys-125 functions as the Nucleophile in the catalytic mechanism.

The protein belongs to the MsrB Met sulfoxide reductase family. Requires Zn(2+) as cofactor.

It carries out the reaction L-methionyl-[protein] + [thioredoxin]-disulfide + H2O = L-methionyl-(R)-S-oxide-[protein] + [thioredoxin]-dithiol. In Variovorax paradoxus (strain S110), this protein is Peptide methionine sulfoxide reductase MsrB.